A 188-amino-acid polypeptide reads, in one-letter code: Ribosome-recycling factor (188 aa).

It belongs to the RRF family.

The protein resides in the cytoplasm. In terms of biological role, responsible for the release of ribosomes from messenger RNA at the termination of protein biosynthesis. May increase the efficiency of translation by recycling ribosomes from one round of translation to another. This Cereibacter sphaeroides (strain ATCC 17025 / ATH 2.4.3) (Rhodobacter sphaeroides) protein is Ribosome-recycling factor.